The primary structure comprises 402 residues: Phosphoglycerate kinase (402 aa).

Substrate is bound by residues 24 to 26 (DFN), Arg-40, 63 to 66 (HFGR), Arg-122, and Arg-155. ATP is bound by residues Lys-206, Gly-297, Glu-328, and 357 to 360 (GGDS).

Belongs to the phosphoglycerate kinase family. Monomer.

It is found in the cytoplasm. The catalysed reaction is (2R)-3-phosphoglycerate + ATP = (2R)-3-phospho-glyceroyl phosphate + ADP. It participates in carbohydrate degradation; glycolysis; pyruvate from D-glyceraldehyde 3-phosphate: step 2/5. The polypeptide is Phosphoglycerate kinase (Synechococcus sp. (strain ATCC 27144 / PCC 6301 / SAUG 1402/1) (Anacystis nidulans)).